Here is a 138-residue protein sequence, read N- to C-terminus: MLQPKRRKYRKEQKGRNTGIATRGNAVSFGEFGLKAVGRGRLTARQIEAARRAMTRHIKRGGRIWIRIFPDKPISQKPAEVRMGNGKGNPEYYVAEIQPGKMLYEMDGVSEELAREAFRLAAAKLPLKTTFIVRQLGA.

The segment covering 1–13 has biased composition (basic residues); the sequence is MLQPKRRKYRKEQ. Residues 1–20 are disordered; sequence MLQPKRRKYRKEQKGRNTGI.

Belongs to the universal ribosomal protein uL16 family. Part of the 50S ribosomal subunit.

Functionally, binds 23S rRNA and is also seen to make contacts with the A and possibly P site tRNAs. In Burkholderia mallei (strain NCTC 10247), this protein is Large ribosomal subunit protein uL16.